The sequence spans 483 residues: NADH-quinone oxidoreductase subunit N (483 aa).

A run of 13 helical transmembrane segments spans residues 13-33, 45-65, 80-100, 111-131, 165-185, 205-225, 244-264, 276-296, 301-321, 328-348, 373-393, 407-429, and 452-472; these read PALP…YGVF, GALA…NAYV, FMKL…LTFI, PVLI…NGLI, FVLG…IYGF, IGVI…ISAV, AFFA…VLFV, IIVF…IGQS, LMAY…AAGT, VLIY…CILA, AFMM…AGFF, LYPL…LRIV, and VLGI…PLIL.

Belongs to the complex I subunit 2 family. NDH-1 is composed of 14 different subunits. Subunits NuoA, H, J, K, L, M, N constitute the membrane sector of the complex.

The protein resides in the cell inner membrane. The catalysed reaction is a quinone + NADH + 5 H(+)(in) = a quinol + NAD(+) + 4 H(+)(out). Its function is as follows. NDH-1 shuttles electrons from NADH, via FMN and iron-sulfur (Fe-S) centers, to quinones in the respiratory chain. The immediate electron acceptor for the enzyme in this species is believed to be ubiquinone. Couples the redox reaction to proton translocation (for every two electrons transferred, four hydrogen ions are translocated across the cytoplasmic membrane), and thus conserves the redox energy in a proton gradient. The protein is NADH-quinone oxidoreductase subunit N of Parvibaculum lavamentivorans (strain DS-1 / DSM 13023 / NCIMB 13966).